A 309-amino-acid chain; its full sequence is Tagatose-6-phosphate kinase (309 aa).

It belongs to the carbohydrate kinase PfkB family. LacC subfamily.

It catalyses the reaction D-tagatofuranose 6-phosphate + ATP = D-tagatofuranose 1,6-bisphosphate + ADP + H(+). It functions in the pathway carbohydrate metabolism; D-tagatose 6-phosphate degradation; D-glyceraldehyde 3-phosphate and glycerone phosphate from D-tagatose 6-phosphate: step 1/2. The protein is Tagatose-6-phosphate kinase of Streptococcus pyogenes serotype M3 (strain SSI-1).